A 73-amino-acid polypeptide reads, in one-letter code: Sec-independent protein translocase protein TatA (73 aa).

Residues 1–21 (MGSFSIWHWLIVLVIVMLVFG) traverse the membrane as a helical segment. Positions 43-73 (MKEGDDKAAPAKELRDSTTIDVDAKEKTRQQ) are disordered.

The protein belongs to the TatA/E family. The Tat system comprises two distinct complexes: a TatABC complex, containing multiple copies of TatA, TatB and TatC subunits, and a separate TatA complex, containing only TatA subunits. Substrates initially bind to the TatABC complex, which probably triggers association of the separate TatA complex to form the active translocon.

The protein localises to the cell inner membrane. In terms of biological role, part of the twin-arginine translocation (Tat) system that transports large folded proteins containing a characteristic twin-arginine motif in their signal peptide across membranes. TatA could form the protein-conducting channel of the Tat system. The chain is Sec-independent protein translocase protein TatA from Cupriavidus pinatubonensis (strain JMP 134 / LMG 1197) (Cupriavidus necator (strain JMP 134)).